Consider the following 291-residue polypeptide: Homoserine kinase (291 aa).

80-90 (RPASGLGSSAA) provides a ligand contact to ATP.

It belongs to the GHMP kinase family. Homoserine kinase subfamily.

It is found in the cytoplasm. It carries out the reaction L-homoserine + ATP = O-phospho-L-homoserine + ADP + H(+). Its pathway is amino-acid biosynthesis; L-threonine biosynthesis; L-threonine from L-aspartate: step 4/5. In terms of biological role, catalyzes the ATP-dependent phosphorylation of L-homoserine to L-homoserine phosphate. The protein is Homoserine kinase of Natronomonas pharaonis (strain ATCC 35678 / DSM 2160 / CIP 103997 / JCM 8858 / NBRC 14720 / NCIMB 2260 / Gabara) (Halobacterium pharaonis).